The sequence spans 146 residues: Cytochrome c-type biogenesis protein CcmE (146 aa).

Residues 1–7 (MQAKHQR) are Cytoplasmic-facing. Residues 8 to 28 (LILGIIALAAVIAAGFLALVA) traverse the membrane as a helical; Signal-anchor for type II membrane protein segment. The Periplasmic segment spans residues 29 to 146 (FKKQAAYFFT…AATQTTLQEK (118 aa)). Residues H123 and Y127 each coordinate heme.

This sequence belongs to the CcmE/CycJ family.

It is found in the cell inner membrane. Heme chaperone required for the biogenesis of c-type cytochromes. Transiently binds heme delivered by CcmC and transfers the heme to apo-cytochromes in a process facilitated by CcmF and CcmH. The polypeptide is Cytochrome c-type biogenesis protein CcmE (Zymomonas mobilis subsp. mobilis (strain ATCC 31821 / ZM4 / CP4)).